We begin with the raw amino-acid sequence, 86 residues long: RQC P-site tRNA stabilizing factor (86 aa).

The S4 RNA-binding domain occupies 1 to 62 (MRLDKFLKVS…QKLVTVQVNE (62 aa)).

The protein belongs to the RqcP family. Associates with stalled 50S ribosomal subunits. Binds to RqcH, 23S rRNA and the P-site tRNA. Does not require RqcH for association with 50S subunits. Crystallized 50S subunits are variously associated with an A/P-site tRNA with or without RqcH, as well as with P- and E-site tRNAs but no RqcH. Displaced from the 50S subunit by puromycin but not thiostrepton.

In terms of biological role, key component of the ribosome quality control system (RQC), a ribosome-associated complex that mediates the extraction of incompletely synthesized nascent chains from stalled ribosomes and their subsequent degradation. RqcH recruits Ala-charged tRNA, and with RqcP directs the elongation of stalled nascent chains on 50S ribosomal subunits, leading to non-templated C-terminal alanine extensions (Ala tail). The Ala tail promotes nascent chain degradation. RqcP is associated with the translocation-like movement of the peptidyl-tRNA from the A-site into the P-site. RqcH, RqcP and charged tRNA(Ala) are necessary and sufficient to add an Ala tail to a model stalled nascent peptide; does not add Val. The polypeptide is RQC P-site tRNA stabilizing factor (Bacillus subtilis (strain 168)).